The chain runs to 88 residues: Large ribosomal subunit protein eL31 (88 aa).

The protein belongs to the eukaryotic ribosomal protein eL31 family.

The protein is Large ribosomal subunit protein eL31 of Saccharolobus islandicus (strain Y.N.15.51 / Yellowstone #2) (Sulfolobus islandicus).